The sequence spans 710 residues: Proline-rich receptor-like protein kinase PERK13 (710 aa).

The tract at residues 1–229 (MSDSPTSSPP…SVPPPANSGG (229 aa)) is disordered. Residues 1–235 (MSDSPTSSPP…NSGGGYQGKT (235 aa)) lie on the Extracellular side of the membrane. 4 stretches are compositionally biased toward pro residues: residues 7-21 (SSPPAPSADSAPPPD), 29-130 (APPP…PPPP), 137-151 (PPAPPPPEQLPPPAS), and 168-188 (ATSPPAPSAPATSPPAPPNAP). N-linked (GlcNAc...) asparagine glycosylation occurs at N191. The segment covering 209–220 (SPSRGVPSSGNS) has biased composition (low complexity). A helical transmembrane segment spans residues 236 to 256 (MAGFAIAGFAVIALMAVVFLV). Over 257 to 710 (RRKKKRNIDA…ENRNFNNRRY (454 aa)) the chain is Cytoplasmic. Residues 289-334 (QNPTKGYSGPGGYNSQQQSNSGNSFGSQRGGGGYTRSGSAPDSAVM) form a disordered region. Low complexity predominate over residues 301–315 (YNSQQQSNSGNSFGS). T342 bears the Phosphothreonine mark. The region spanning 353 to 619 (FSKHNILGEG…RHSGPKRPRM (267 aa)) is the Protein kinase domain. Residues 359–367 (LGEGGFGCV) and K381 contribute to the ATP site. Y426 carries the post-translational modification Phosphotyrosine. The Proton acceptor role is filled by D477. Position 510 is a phosphoserine (S510). T511 and T516 each carry phosphothreonine. A Phosphotyrosine modification is found at Y524. A disordered region spans residues 676-710 (SGDYSVQDSRKGSNGASSEFTRNETENRNFNNRRY).

This sequence belongs to the protein kinase superfamily. Ser/Thr protein kinase family. Interacts with KIPK1 and KIPK2 (via its cytosolic domain). Mostly expressed in roots, especially in root hairs.

It is found in the cell membrane. The enzyme catalyses L-seryl-[protein] + ATP = O-phospho-L-seryl-[protein] + ADP + H(+). It carries out the reaction L-threonyl-[protein] + ATP = O-phospho-L-threonyl-[protein] + ADP + H(+). Negatively regulates root hair elongation. In Arabidopsis thaliana (Mouse-ear cress), this protein is Proline-rich receptor-like protein kinase PERK13 (PERK13).